We begin with the raw amino-acid sequence, 215 residues long: 3-isopropylmalate dehydratase small subunit (215 aa).

This sequence belongs to the LeuD family. LeuD type 1 subfamily. Heterodimer of LeuC and LeuD.

It carries out the reaction (2R,3S)-3-isopropylmalate = (2S)-2-isopropylmalate. It functions in the pathway amino-acid biosynthesis; L-leucine biosynthesis; L-leucine from 3-methyl-2-oxobutanoate: step 2/4. Catalyzes the isomerization between 2-isopropylmalate and 3-isopropylmalate, via the formation of 2-isopropylmaleate. The polypeptide is 3-isopropylmalate dehydratase small subunit (Polynucleobacter asymbioticus (strain DSM 18221 / CIP 109841 / QLW-P1DMWA-1) (Polynucleobacter necessarius subsp. asymbioticus)).